Reading from the N-terminus, the 213-residue chain is ATP phosphoribosyltransferase (213 aa).

The protein belongs to the ATP phosphoribosyltransferase family. Short subfamily. As to quaternary structure, heteromultimer composed of HisG and HisZ subunits.

Its subcellular location is the cytoplasm. It catalyses the reaction 1-(5-phospho-beta-D-ribosyl)-ATP + diphosphate = 5-phospho-alpha-D-ribose 1-diphosphate + ATP. Its pathway is amino-acid biosynthesis; L-histidine biosynthesis; L-histidine from 5-phospho-alpha-D-ribose 1-diphosphate: step 1/9. Functionally, catalyzes the condensation of ATP and 5-phosphoribose 1-diphosphate to form N'-(5'-phosphoribosyl)-ATP (PR-ATP). Has a crucial role in the pathway because the rate of histidine biosynthesis seems to be controlled primarily by regulation of HisG enzymatic activity. This Methylococcus capsulatus (strain ATCC 33009 / NCIMB 11132 / Bath) protein is ATP phosphoribosyltransferase.